The sequence spans 320 residues: Phosphate acyltransferase (320 aa).

It belongs to the PlsX family. As to quaternary structure, homodimer. Probably interacts with PlsY.

The protein localises to the cytoplasm. It carries out the reaction a fatty acyl-[ACP] + phosphate = an acyl phosphate + holo-[ACP]. The protein operates within lipid metabolism; phospholipid metabolism. Its function is as follows. Catalyzes the reversible formation of acyl-phosphate (acyl-PO(4)) from acyl-[acyl-carrier-protein] (acyl-ACP). This enzyme utilizes acyl-ACP as fatty acyl donor, but not acyl-CoA. The sequence is that of Phosphate acyltransferase from Syntrophomonas wolfei subsp. wolfei (strain DSM 2245B / Goettingen).